A 321-amino-acid chain; its full sequence is uncharacterized protein (321 aa).

An HTH lacI-type domain is found at 1-56 (MANIKDIAEKAGVSVTTVSRVINNHPYVSEDKRKRVFEAMESLEYTRNIHAVHLSK). The segment at residues 4–23 (IKDIAEKAGVSVTTVSRVIN) is a DNA-binding region (H-T-H motif).

This is an uncharacterized protein from Bacillus subtilis (strain 168).